Reading from the N-terminus, the 101-residue chain is MAKKSKIAKNEQRKVVVERYAAKRAELKKALVDPNGTDESREAARLGLQKLPRDASPIRVRNRDAVDGRPRGNLSKFGISRVRFRDMAHRGELPGITKSSW.

The protein belongs to the universal ribosomal protein uS14 family. In terms of assembly, part of the 30S ribosomal subunit. Contacts proteins S3 and S10.

Functionally, binds 16S rRNA, required for the assembly of 30S particles and may also be responsible for determining the conformation of the 16S rRNA at the A site. This chain is Small ribosomal subunit protein uS14, found in Leifsonia xyli subsp. xyli (strain CTCB07).